Consider the following 65-residue polypeptide: Conotoxin Bu19 (65 aa).

The first 21 residues, 1-21, serve as a signal peptide directing secretion; the sequence is MGMRMVFTVFLLVVLATTVVS. Residues 22 to 48 constitute a propeptide that is removed on maturation; the sequence is FTSDRASDGRNAAANDKASDLAALAVR. Disulfide bonds link cysteine 50–cysteine 56 and cysteine 51–cysteine 64. The residue at position 64 (cysteine 64) is a Cysteine amide.

Belongs to the conotoxin A superfamily. In terms of tissue distribution, expressed by the venom duct.

The protein resides in the secreted. In Conus bullatus (Bubble cone), this protein is Conotoxin Bu19.